The chain runs to 204 residues: Inactive ribonuclease-like protein 9 (204 aa).

A signal peptide spans 1–26 (MMRTLITTHPLLLLLLLQQLLQPVQL). 3 cysteine pairs are disulfide-bonded: Cys-97–Cys-152, Cys-115–Cys-167, and Cys-122–Cys-129. N-linked (GlcNAc...) asparagine glycans are attached at residues Asn-130 and Asn-142.

It belongs to the pancreatic ribonuclease family.

Its subcellular location is the secreted. Functionally, does not exhibit any ribonuclease activity. This Chlorocebus pygerythrus (Vervet monkey) protein is Inactive ribonuclease-like protein 9 (RNASE9).